A 130-amino-acid polypeptide reads, in one-letter code: MKDWLDEIHWNSDGLVPAIAQDHKTGRVLMMAWMNREALSLTAAENRAIYWSRSRGKLWRKGEESGHVQKLHELRLDCDADVIILMVEQIGGIACHTGRESCFYRVYEKSGWKTVDPVLKDPDAIYPAGH.

Aspartate 77 contributes to the Mg(2+) binding site. Cysteine 78 lines the Zn(2+) pocket. Residues aspartate 79 and aspartate 81 each contribute to the Mg(2+) site. 2 residues coordinate Zn(2+): cysteine 95 and cysteine 102.

Belongs to the PRA-CH family. As to quaternary structure, homodimer. Mg(2+) serves as cofactor. Requires Zn(2+) as cofactor.

It is found in the cytoplasm. The enzyme catalyses 1-(5-phospho-beta-D-ribosyl)-5'-AMP + H2O = 1-(5-phospho-beta-D-ribosyl)-5-[(5-phospho-beta-D-ribosylamino)methylideneamino]imidazole-4-carboxamide. It functions in the pathway amino-acid biosynthesis; L-histidine biosynthesis; L-histidine from 5-phospho-alpha-D-ribose 1-diphosphate: step 3/9. Catalyzes the hydrolysis of the adenine ring of phosphoribosyl-AMP. The polypeptide is Phosphoribosyl-AMP cyclohydrolase (Pseudomonas syringae pv. syringae (strain B728a)).